Reading from the N-terminus, the 198-residue chain is Glycerol-3-phosphate acyltransferase (198 aa).

5 helical membrane-spanning segments follow: residues 1–21, 52–72, 81–101, 115–135, and 153–173; these read MILITSLAVLVSYLIGSIPAA, GPALLVAAFDILKGAIAVGLA, WTALCGVAAVLGHNFSPFLGF, LALDPVVGGGAFVVGVGCIWL, and LAAALARPGWLLLIVAFLAAL.

This sequence belongs to the PlsY family. In terms of assembly, probably interacts with PlsX.

The protein localises to the cell membrane. The catalysed reaction is an acyl phosphate + sn-glycerol 3-phosphate = a 1-acyl-sn-glycero-3-phosphate + phosphate. Its pathway is lipid metabolism; phospholipid metabolism. Its function is as follows. Catalyzes the transfer of an acyl group from acyl-phosphate (acyl-PO(4)) to glycerol-3-phosphate (G3P) to form lysophosphatidic acid (LPA). This enzyme utilizes acyl-phosphate as fatty acyl donor, but not acyl-CoA or acyl-ACP. This Deinococcus geothermalis (strain DSM 11300 / CIP 105573 / AG-3a) protein is Glycerol-3-phosphate acyltransferase.